A 194-amino-acid chain; its full sequence is Adapter protein MecA 2 (194 aa).

It belongs to the MecA family. Homodimer.

Functionally, enables the recognition and targeting of unfolded and aggregated proteins to the ClpC protease or to other proteins involved in proteolysis. Also involved in Spx degradation by ClpC. Acts negatively in the development of competence by binding ComK and recruiting it to the ClpCP protease. When overexpressed, inhibits sporulation. The polypeptide is Adapter protein MecA 2 (mecB) (Bacillus subtilis (strain 168)).